Reading from the N-terminus, the 307-residue chain is Ornithine carbamoyltransferase (307 aa).

Carbamoyl phosphate-binding positions include 53 to 56 (STRT), Gln80, Arg104, and 131 to 134 (HPCQ). Residues Asn162, Asp220, and 224 to 225 (SM) each bind L-ornithine. Carbamoyl phosphate-binding positions include 260–261 (CL) and Arg288.

It belongs to the aspartate/ornithine carbamoyltransferase superfamily. OTCase family.

Its subcellular location is the cytoplasm. The enzyme catalyses carbamoyl phosphate + L-ornithine = L-citrulline + phosphate + H(+). Its pathway is amino-acid biosynthesis; L-arginine biosynthesis; L-arginine from L-ornithine and carbamoyl phosphate: step 1/3. Its function is as follows. Reversibly catalyzes the transfer of the carbamoyl group from carbamoyl phosphate (CP) to the N(epsilon) atom of ornithine (ORN) to produce L-citrulline. The polypeptide is Ornithine carbamoyltransferase (Nitrosomonas europaea (strain ATCC 19718 / CIP 103999 / KCTC 2705 / NBRC 14298)).